Consider the following 198-residue polypeptide: MEHYISLFVKAVFIENMALSFFLGMCTFLAVSKKVSPAFGLGIAVTFVLGIAVPVNQLIYANVLKENALIEGVDLSFLNFITFIGVIAGLVQILEMVLDKFMPSLYNALGIFLPLIAVNCAIFGGVSFMVQRDYNFPESIVYGFGSGLGWMLAIVALAGLTEKMKYADIPAGLKGLGITFISVGLMALGFMSFSGIQL.

The next 6 membrane-spanning stretches (helical) occupy residues 11-31, 35-55, 77-97, 110-130, 140-160, and 176-196; these read AVFIENMALSFFLGMCTFLAV, VSPAFGLGIAVTFVLGIAVPV, FLNFITFIGVIAGLVQILEMV, GIFLPLIAVNCAIFGGVSFMV, IVYGFGSGLGWMLAIVALAGL, and LGITFISVGLMALGFMSFSGI.

Belongs to the NqrDE/RnfAE family. In terms of assembly, composed of six subunits; NqrA, NqrB, NqrC, NqrD, NqrE and NqrF.

Its subcellular location is the cell inner membrane. It catalyses the reaction a ubiquinone + n Na(+)(in) + NADH + H(+) = a ubiquinol + n Na(+)(out) + NAD(+). Functionally, NQR complex catalyzes the reduction of ubiquinone-1 to ubiquinol by two successive reactions, coupled with the transport of Na(+) ions from the cytoplasm to the periplasm. NqrA to NqrE are probably involved in the second step, the conversion of ubisemiquinone to ubiquinol. The chain is Na(+)-translocating NADH-quinone reductase subunit E from Haemophilus influenzae (strain ATCC 51907 / DSM 11121 / KW20 / Rd).